The sequence spans 726 residues: MAGRDPRDRAPRVRNRAPAAVQITAEQLLREAQERQEPAIQAPKQRVQDLEELSEFQARKRTEFESRIRYSRDSILAWTKYAQWEASQNEYERSRSVFERALDVDPRSVDLWIKYTDMELKARNINHARNLFDRAITLLPRVDALWYKYVYLEELLLNVSGARQIFERWMQWEPNDKAWQSYIKLEERYNELDRASAIYERWIACRPIPKNWVTWAKFEEDRGQPDKAREVFQTALEFFGDEEEQVEKAQSVFAAFARMETRLKEFERARVIYKFALARLPRSKSASLYAQYTKFEKQHGDRAGVELTVLGKRRIQYEEELAYDPTNYDAWFSLARLEEDAYRADREDGEDVEPMRVREVYERAVANVPPALEKRYWRRYIYLWLQYAAFEEIDTKDYDRARDVYKAAVKLVPHKTFTFAKLWLAYAYFEIRRLDVSAARKVLGAGIGMCPKPKLFTGYIELEMRLREFDRVRTLYEKFLTYDPSLSSAWIQWTQVESAVEDFERVRAIFELAVQQSLDMPEIVWKAYIDFEAGEGERERARNLYERLLERTSHVKVWISYALMEIATLGGGEDEDGNEIEGEAGDADLARQVFERGYKDLRAKGEKEDRAVLLESWKSFEQEHGDEETLAKVEDMLPTTRKRWRKAEDGSGELEEYWDLVFPDDEREANPTSFKFFQAAQAWAQQRAGQGEEGGLSYDLPSDSEDENEDGDEDGDGREEEGMDQD.

HAT repeat units lie at residues 55–87 (EFQA…WEAS), 89–121 (NEYE…MELK), 123–155 (RNIN…LEEL), 157–188 (LNVS…LEER), 190–221 (NELD…FEED), 223–262 (GQPD…METR), 264–298 (KEFE…FEKQ), 308–340 (TVLG…LEED), 352–386 (VEPM…LWLQ), 396–432 (KDYD…FEIR), 434–465 (LDVS…LEMR), 467–499 (REFD…VESA), 501–534 (EDFE…FEAG), 536–567 (GERE…MEIA), 585–626 (GDAD…EHGD), and 635–667 (DMLP…DDER). Residues 682 to 726 (AWAQQRAGQGEEGGLSYDLPSDSEDENEDGDEDGDGREEEGMDQD) are disordered. Positions 702-726 (SDSEDENEDGDEDGDGREEEGMDQD) are enriched in acidic residues.

Belongs to the crooked-neck family. Associated with the spliceosome.

Its subcellular location is the nucleus. Involved in pre-mRNA splicing and cell cycle progression. Required for the spliceosome assembly and initiation of the DNA replication. This is Pre-mRNA-splicing factor CLF1 (CLF1) from Cryptococcus neoformans var. neoformans serotype D (strain B-3501A) (Filobasidiella neoformans).